A 156-amino-acid polypeptide reads, in one-letter code: Endoribonuclease YbeY (156 aa).

Zn(2+) contacts are provided by histidine 122, histidine 126, and histidine 132.

This sequence belongs to the endoribonuclease YbeY family. Zn(2+) is required as a cofactor.

The protein localises to the cytoplasm. Its function is as follows. Single strand-specific metallo-endoribonuclease involved in late-stage 70S ribosome quality control and in maturation of the 3' terminus of the 16S rRNA. This Geobacillus sp. (strain WCH70) protein is Endoribonuclease YbeY.